A 360-amino-acid polypeptide reads, in one-letter code: S-adenosylmethionine:tRNA ribosyltransferase-isomerase (360 aa).

The protein belongs to the QueA family. Monomer.

It localises to the cytoplasm. The enzyme catalyses 7-aminomethyl-7-carbaguanosine(34) in tRNA + S-adenosyl-L-methionine = epoxyqueuosine(34) in tRNA + adenine + L-methionine + 2 H(+). It participates in tRNA modification; tRNA-queuosine biosynthesis. Its function is as follows. Transfers and isomerizes the ribose moiety from AdoMet to the 7-aminomethyl group of 7-deazaguanine (preQ1-tRNA) to give epoxyqueuosine (oQ-tRNA). The polypeptide is S-adenosylmethionine:tRNA ribosyltransferase-isomerase (Nitrobacter winogradskyi (strain ATCC 25391 / DSM 10237 / CIP 104748 / NCIMB 11846 / Nb-255)).